We begin with the raw amino-acid sequence, 113 residues long: Non-structural protein 1 (113 aa).

The protein belongs to the pneumovirus non-structural protein 1 family.

The protein localises to the host cytoplasm. It localises to the host mitochondrion. May play a minor role in antagonizing the type I IFN-mediated antiviral response. Additionally, NS1 may serve some inhibitory role in viral transcription and RNA replication. The protein is Non-structural protein 1 (1C) of Mus musculus (Mouse).